Reading from the N-terminus, the 656-residue chain is MEGDGSDPEPPDAGEDSKSENGENAPIYCICRKPDINCFMIGCDNCNEWFHGDCIRITEKMAKAIREWYCRECREKDPKLEIRYRHKKSRERDGNERDSSEPRDEGGGRKRPVPDPDLQRRAGSGTGVGAMLARGSASPHKSSPQPLVATPSQHHQQQQQQIKRSARMCGECEACRRTEDCGHCDFCRDMKKFGGPNKIRQKCRLRQCQLRARESYKYFPSSLSPVTPSESLPRPRRPLPTQQQPQPSQKLGRIREDEGAVASSTVKEPPEATATPEPLSDEDLPLDPDLYQDFCAGAFDDHGLPWMSDTEESPFLDPALRKRAVKVKHVKRREKKSEKKKEERYKRHRQKQKHKDKWKHPERADAKDPASLPQCLGPGCVRPAQPSSKYCSDDCGMKLAANRIYEILPQRIQQWQQSPCIAEEHGKKLLERIRREQQSARTRLQEMERRFHELEAIILRAKQQAVREDEESNEGDSDDTDLQIFCVSCGHPINPRVALRHMERCYAKYESQTSFGSMYPTRIEGATRLFCDVYNPQSKTYCKRLQVLCPEHSRDPKVPADEVCGCPLVRDVFELTGDFCRLPKRQCNRHYCWEKLRRAEVDLERVRVWYKLDELFEQERNVRTAMTNRAGLLALMLHQTIQHDPLTTDLRSSADR.

N-acetylmethionine is present on Met-1. Positions 1-14 (MEGDGSDPEPPDAG) are enriched in acidic residues. Residues 1–20 (MEGDGSDPEPPDAGEDSKSE) are disordered. Ser-6 and Ser-19 each carry phosphoserine. A PHD-type zinc finger spans residues 28-76 (YCICRKPDINCFMIGCDNCNEWFHGDCIRITEKMAKAIREWYCRECREK). Positions 84–162 (YRHKKSRERD…QHHQQQQQQI (79 aa)) are disordered. Residues 90–120 (RERDGNERDSSEPRDEGGGRKRPVPDPDLQR) are compositionally biased toward basic and acidic residues. Ser-124 bears the Phosphoserine mark. Residues 160-209 (QQIKRSARMCGECEACRRTEDCGHCDFCRDMKKFGGPNKIRQKCRLRQCQ) form a CXXC-type zinc finger. Residues Cys-169, Cys-172, Cys-175, Cys-181, Cys-184, Cys-187, Cys-203, and Cys-208 each coordinate Zn(2+). 2 disordered regions span residues 219-287 (FPSS…LPLD) and 311-373 (EESP…ASLP). A Phosphoserine modification is found at Ser-224. Thr-227 is subject to Phosphothreonine. Low complexity predominate over residues 239–249 (LPTQQQPQPSQ). Lys-250 is covalently cross-linked (Glycyl lysine isopeptide (Lys-Gly) (interchain with G-Cter in SUMO2)). The span at 321–334 (RKRAVKVKHVKRRE) shows a compositional bias: basic residues. A compositionally biased stretch (basic and acidic residues) spans 335–345 (KKSEKKKEERY). A compositionally biased stretch (basic residues) spans 346–358 (KRHRQKQKHKDKW). Residues 359–368 (KHPERADAKD) are compositionally biased toward basic and acidic residues. Residues 422 to 474 (AEEHGKKLLERIRREQQSARTRLQEMERRFHELEAIILRAKQQAVREDEESNE) are a coiled coil.

Component of the SET1 complex, at least composed of the catalytic subunit (SETD1A or SETD1B), WDR5, WDR82, RBBP5, ASH2L/ASH2, CXXC1/CFP1 HCFC1 and DPY30. Interacts with SETD1A. Interacts with ZNF335. Interacts with PRDM9; this interaction does not link PRDM9-activated recombination hotspot sites with DSB machinery and is not required for the hotspot recognition pathway. Interacts with histone H3K4me3. Post-translationally, may be regulated by proteolysis. In terms of tissue distribution, ubiquitous.

The protein localises to the nucleus speckle. It is found in the nucleus. In terms of biological role, transcriptional activator that exhibits a unique DNA binding specificity for CpG unmethylated motifs with a preference for CpGG. The polypeptide is CXXC-type zinc finger protein 1 (CXXC1) (Homo sapiens (Human)).